A 519-amino-acid polypeptide reads, in one-letter code: Circadian clock oscillator protein KaiC (519 aa).

A KaiC 1 domain is found at 1–247 (MTSAEMTSPN…TITDHGINIF (247 aa)). The ATP site is built by Gly49, Thr50, Gly51, Lys52, Thr53, and Leu54. Position 53 (Thr53) interacts with Mg(2+). Catalysis depends on Glu77, which acts as the Proton acceptor in CI (KaiC 1). Ser89 contributes to the ATP binding site. The interval 115-122 (QEVVGGFD) is B-loop, required to bind KaiB and SasA. ATP is bound by residues Lys224, Leu225, Arg226, Thr228, His230, Thr240, and Asp241. Residues 248–260 (PLGAMRLTQRSSN) are linker. A KaiC 2 domain is found at 261–519 (VRVSSGVVRL…RGVQEKGPES (259 aa)). ATP-binding residues include Thr290, Gly291, Thr292, Gly293, Lys294, Thr295, and Leu296. Thr295 lines the Mg(2+) pocket. Glu318 is a binding site for Mg(2+). Residue Glu318 is the Proton acceptor in CII (KaiC 2) of the active site. An ATP-binding site is contributed by Trp331. At Ser431 the chain carries Phosphoserine; by autocatalysis. Thr432 carries the post-translational modification Phosphothreonine; by autocatalysis. ATP contacts are provided by Arg451, Lys457, Met458, Arg459, Ser461, His463, and Lys465. The tract at residues 488–497 (RIISGSPTRI) is A-loop, interacts with KaiA.

This sequence belongs to the KaiC family. In terms of assembly, homohexamer resembling 2 stacked donuts with a central pore nearly blocked on one side; hexamerization is dependent on ATP-binding. Binds 12 ATP; 6 between each subunit in both layers. KaiB only binds to phospho-Ser-431 KaiC (not doubly phosphorylated KaiC). Complex formation between KaiB and KaiC is regulated by the phosphorylation state of KaiC and by an ATP hydrolysis-driven conformation change in the CI ring of KaiC; complex formation is slow. Slow complex formation is crucial for the timing of the circadian period. KaiB switches to a thioredoxin-like form called KaiB(fs) when bound to KaiC. The KaiABC complex composition changes during the circadian cycle to control KaiC phosphorylation. Complexes KaiC(6), KaiA(2-4):KaiC(6), KaiB(6):KaiC(6) and KaiC(6):KaiB(6):KaiA(12) are among the most important forms, many form cooperatively. Interacts directly with KaiB and SasA. The CI domain binds to KaiB and SasA; as they have a similar fold they compete for the same site on CI. CikA interacts with this protein in the clock complex. Binds to the C-terminus of KaiA via a coiled-coil structure. Forms KaiC(6):KaiB(1) and KaiC(6):KaiB(6) complexes. Mg(2+) serves as cofactor. Post-translationally, has a 4 step phosphorylation cycle; the autokinase acts first on Thr-432, then Ser-431. When Ser-431 is modified KaiC switches to an autophosphatase mode, acting first on phospho-Thr-432 then phospho-Ser-431. Phosphorylated and dephosphorylated on serine/threonine residues by autocatalysis. Unphosphorylated, mono- and di-phosphorylated forms exist. The phosphorylated form correlates with clock speed. The presence of KaiA increases phosphorylation and stabilizes these forms. Phosphorylated on serine and threonine residues by autocatalysis. Has a 4 step phosphorylation cycle; the autokinase acts first on Thr-432, then Ser-431. When Ser-431 is modified KaiC switches to an autophosphatase mode, acting first on phospho-Thr-432 then phospho-Ser-431.

The enzyme catalyses L-seryl-[protein] + ATP = O-phospho-L-seryl-[protein] + ADP + H(+). It carries out the reaction L-threonyl-[protein] + ATP = O-phospho-L-threonyl-[protein] + ADP + H(+). It catalyses the reaction ATP + H2O = ADP + phosphate + H(+). Its activity is regulated as follows. Interaction with KaiA stimulates autophosphorylation, KaiC interaction with KaiB sequesters KaiA, preventing it stimulating the KaiC kinase, leading to autodephosphorylation. A KaiA dimer is sufficient to enhance KaiC phosphorylation. Interaction of KaiA with the A-loop stimulates autokinase activity. Its function is as follows. The KaiABC oscillator complex constitutes the main circadian regulator in cyanobacteria. Complex composition changes during the circadian cycle to control KaiC phosphorylation; KaiA stimulates KaiC autophosphorylation, while KaiB sequesters KaiA, leading to KaiC autodephosphorylation. The Kai complex controls chromosome condensation, leading to a transcription accessible chromosome during the first half of the circadian cycle and a compact, less transcription-accessible chromosome during the latter half. Clock output pathways impact the RpaA transcriptional regulator. Circadian oscillations can be generated in vitro by incubating KaiA, KaiB and KaiC with 1 mM ATP. The cycle is self-sustainable for at least 3 cycles and resistant to temperature changes. Mutations in KaiC alone prolong or reduce the circadian rhythm. A very robust clock is reconstituted with KaiA, KaiB, KaiC, SasA, CikA and RpaA; output is measured by transcription from an appropriate reporter. The level of KaiC phosphorylation and KaiC ATPase activity represent the key features of the biochemical oscillator. KaiA homodimer binding to the KaiC CII domain stimulates KaiC's ATPase activity and forms KaiA(2-4):KaiC(6) complexes, which stimulate KaiC autophosphorylation first on Thr-432 then Ser-431. Phospho-Ser-431-KaiC accumulation triggers binding of KaiB to CI to form the KaiB(6):KaiC(6) complex, leading to changes in the output regulators CikA and SasA. KaiB(6):KaiC(6) formation exposes a site for KaiA binding that sequesters KaiA from the CII domain, making the KaiC(6):KaiB(6):KaiA(12) complex that results in KaiC autodephosphorylation. Complete dephosphorylation of KaiC leads to dissociation of KaiA(2):KaiB(1), completing 1 cycle of the Kai oscillator. In terms of biological role, has a weak, temperature-independent ATPase activity (about 15 molecules of ATP per day); the addition of KaiA and KaiB increases activity slightly and makes the activity oscillate with a circadian period in vitro for over 60 hours. ATPase activity defines the circadian period. The phosphorylation state of KaiC modulates its ATPase activity and effects KaiB binding. Functionally, there are several clock output pathways; SasA/RpaA, CikA/RpaA and LabA. KaiC enhances the autophosphorylation activity of SasA, which then transfers its phosphate group to RpaA to activate it. Phosphotransfer is maximal when KaiC phosphorylation is active during the circadian cycle. KaiB and KaiC together enhance the phosphatase activity of CikA on phospho-RpaA. Its function is as follows. KaiC is important for metabolic partitioning during the dark to light shift, modulating the balance between the Calvin cycle and oxidative pentose phosphate pathway under natural growth conditions. In Synechococcus elongatus (strain ATCC 33912 / PCC 7942 / FACHB-805) (Anacystis nidulans R2), this protein is Circadian clock oscillator protein KaiC.